Reading from the N-terminus, the 126-residue chain is Scygonadin (126 aa).

A signal peptide spans 1–24 (MRSSLLLGLTVVVLLGVIVPPCMA).

In terms of tissue distribution, expressed in the ejaculatory ducts of mature males. Not detected in the ejaculatory ducts of immature males. Not detected in hepatopancreas, female reproductive tract, eyes, exoskeleton, subcuticular epithelia, heart, gills, stomach, muscle and hemocytes.

It localises to the secreted. Functionally, has antibacterial activity against the Gram-positive bacterium M.luteus with an IC(90) of 125ug/ml. Has weak antibacterial activity against the Gram-negative bacterium A.hydrophila. This Scylla serrata (Mud crab) protein is Scygonadin.